A 943-amino-acid polypeptide reads, in one-letter code: Isoleucine--tRNA ligase (943 aa).

The 'HIGH' region signature appears at 58–68; that stretch reads PYANGKIHIGH. Position 567 (E567) interacts with L-isoleucyl-5'-AMP. A 'KMSKS' region motif is present at residues 608-612; sequence KMSKS. ATP is bound at residue K611. 4 residues coordinate Zn(2+): C906, C909, C926, and C929.

The protein belongs to the class-I aminoacyl-tRNA synthetase family. IleS type 1 subfamily. As to quaternary structure, monomer. Requires Zn(2+) as cofactor.

Its subcellular location is the cytoplasm. The catalysed reaction is tRNA(Ile) + L-isoleucine + ATP = L-isoleucyl-tRNA(Ile) + AMP + diphosphate. In terms of biological role, catalyzes the attachment of isoleucine to tRNA(Ile). As IleRS can inadvertently accommodate and process structurally similar amino acids such as valine, to avoid such errors it has two additional distinct tRNA(Ile)-dependent editing activities. One activity is designated as 'pretransfer' editing and involves the hydrolysis of activated Val-AMP. The other activity is designated 'posttransfer' editing and involves deacylation of mischarged Val-tRNA(Ile). The polypeptide is Isoleucine--tRNA ligase (Pseudomonas putida (strain ATCC 47054 / DSM 6125 / CFBP 8728 / NCIMB 11950 / KT2440)).